Consider the following 172-residue polypeptide: Large ribosomal subunit protein uL10 (172 aa).

This sequence belongs to the universal ribosomal protein uL10 family. Part of the ribosomal stalk of the 50S ribosomal subunit. The N-terminus interacts with L11 and the large rRNA to form the base of the stalk. The C-terminus forms an elongated spine to which L12 dimers bind in a sequential fashion forming a multimeric L10(L12)X complex.

Functionally, forms part of the ribosomal stalk, playing a central role in the interaction of the ribosome with GTP-bound translation factors. This chain is Large ribosomal subunit protein uL10 (rplJ), found in Caulobacter vibrioides (strain ATCC 19089 / CIP 103742 / CB 15) (Caulobacter crescentus).